Consider the following 206-residue polypeptide: Pyrrolidone-carboxylate peptidase (206 aa).

Catalysis depends on residues Glu-76, Cys-139, and His-163.

This sequence belongs to the peptidase C15 family. As to quaternary structure, homotetramer.

The protein resides in the cytoplasm. It carries out the reaction Release of an N-terminal pyroglutamyl group from a polypeptide, the second amino acid generally not being Pro.. Functionally, removes 5-oxoproline from various penultimate amino acid residues except L-proline. The chain is Pyrrolidone-carboxylate peptidase (pcp) from Pyrococcus horikoshii (strain ATCC 700860 / DSM 12428 / JCM 9974 / NBRC 100139 / OT-3).